A 564-amino-acid chain; its full sequence is Probable lysosomal cobalamin transporter (564 aa).

Transmembrane regions (helical) follow at residues 8 to 28 (LIWSVYGVAIAILIAVASTFI), 41 to 61 (VTLICIISITVLLATVLLLPV), 94 to 114 (TIVYYSLYTVDALLCLIGIPF), 144 to 164 (YTLFFVAILIVLFLVGFFIPT), 188 to 208 (ALTFSVGILTTLGLSLYIIYT), 312 to 332 (LLAGFVLLLAALFLWTSLCVT), 375 to 395 (VIFTLIVLFLFCSSVVGIAAF), 418 to 438 (LLLTSMLMLITLALNYSVAVI), and 506 to 526 (FFGAVFFWAQFIFLGLYLLVL).

Belongs to the LIMR family. LMBRD1 subfamily.

Its subcellular location is the lysosome membrane. Its function is as follows. Probable lysosomal cobalamin transporter. Required to export cobalamin from lysosomes allowing its conversion to cofactors. The protein is Probable lysosomal cobalamin transporter of Aspergillus clavatus (strain ATCC 1007 / CBS 513.65 / DSM 816 / NCTC 3887 / NRRL 1 / QM 1276 / 107).